The primary structure comprises 206 residues: Histidine biosynthesis bifunctional protein HisIE (206 aa).

The interval 1–117 is phosphoribosyl-AMP cyclohydrolase; that stretch reads MGSETTAAGD…SCFPTAPSQF (117 aa). Residues 118–206 form a phosphoribosyl-ATP pyrophosphohydrolase region; sequence LGSLDALIAE…AVALLESRHK (89 aa).

It in the N-terminal section; belongs to the PRA-CH family. This sequence in the C-terminal section; belongs to the PRA-PH family.

It is found in the cytoplasm. It carries out the reaction 1-(5-phospho-beta-D-ribosyl)-ATP + H2O = 1-(5-phospho-beta-D-ribosyl)-5'-AMP + diphosphate + H(+). It catalyses the reaction 1-(5-phospho-beta-D-ribosyl)-5'-AMP + H2O = 1-(5-phospho-beta-D-ribosyl)-5-[(5-phospho-beta-D-ribosylamino)methylideneamino]imidazole-4-carboxamide. It functions in the pathway amino-acid biosynthesis; L-histidine biosynthesis; L-histidine from 5-phospho-alpha-D-ribose 1-diphosphate: step 2/9. It participates in amino-acid biosynthesis; L-histidine biosynthesis; L-histidine from 5-phospho-alpha-D-ribose 1-diphosphate: step 3/9. The protein is Histidine biosynthesis bifunctional protein HisIE of Xanthomonas campestris pv. campestris (strain ATCC 33913 / DSM 3586 / NCPPB 528 / LMG 568 / P 25).